Consider the following 159-residue polypeptide: uncharacterized protein (159 aa).

3 helical membrane-spanning segments follow: residues 76–96 (AIKYLIEGLAVAFVAYYFIGK), 104–124 (IVMLGITAACVFAILDVFSPT), and 131–151 (FGAGFGIGTSLFGLNPAVIGG).

The protein localises to the membrane. This is an uncharacterized protein from Acanthamoeba polyphaga (Amoeba).